The primary structure comprises 77 residues: NADH dehydrogenase [ubiquinone] 1 alpha subcomplex subunit 3 (77 aa).

A helical membrane pass occupies residues 23 to 45; it reads IVGGSALALAGIVMATIGVANYY.

This sequence belongs to the complex I NDUFA3 subunit family. Complex I is composed of 43 different subunits.

It is found in the mitochondrion inner membrane. Its subcellular location is the cytoplasm. It localises to the myofibril. The protein localises to the sarcomere. The protein resides in the z line. In terms of biological role, accessory subunit of the mitochondrial membrane respiratory chain NADH dehydrogenase (Complex I), that is believed not to be involved in catalysis. Complex I functions in the transfer of electrons from NADH to the respiratory chain. The immediate electron acceptor for the enzyme is believed to be ubiquinone. Required for the maintenance of muscle integrity and for cell proliferation in the wing imaginal disc epithelium, possibly by interacting with the chaperone-assisted selective autophagy (CASA) pathway. This is NADH dehydrogenase [ubiquinone] 1 alpha subcomplex subunit 3 from Drosophila melanogaster (Fruit fly).